The primary structure comprises 652 residues: Drebrin (652 aa).

Residue alanine 2 is modified to N-acetylalanine. An ADF-H domain is found at 5 to 134; it reads GFAAHRLELL…DPGAIGQRLS (130 aa). 2 stretches are compositionally biased toward basic and acidic residues: residues 211-236 and 288-298; these read MEQE…EEHR and DNPREFFKQQE. 2 disordered regions span residues 211 to 350 and 371 to 652; these read MEQE…YITC and SAAG…GGGL. Positions 328 to 340 are enriched in low complexity; that stretch reads SGPPSSSSSSSSP. Over residues 507–517 the composition is skewed to pro residues; that stretch reads PDTPAGPPVPP. 2 stretches are compositionally biased toward acidic residues: residues 540 to 554 and 640 to 652; these read QHEE…EEAT and PLPE…GGGL.

Brain neurons.

It is found in the cytoplasm. The protein localises to the cell projection. It localises to the dendrite. The protein resides in the cell cortex. Its subcellular location is the cell junction. It is found in the growth cone. In terms of biological role, actin cytoskeleton-organizing protein that plays a role in the formation of cell projections. Plays a role in dendritic spine morphogenesis and organization, including the localization of the dopamine receptor DRD1 to the dendritic spines. Involved in synaptic plasticity. This is Drebrin (DBN1) from Gallus gallus (Chicken).